A 301-amino-acid chain; its full sequence is MSDRAQPSASEPVRNIVLVGPTGNGKSSTGNSLIGKEVFILETVECKTCKAKTLDGQIINVIDTPGLFDLSVSTDYMNKEIINCLTLTDGGLHAVVLVLSVGTDILKEEEAALNKLQLLFGSKIVDYLVVLFTGGDVLEKENKTLDDYLSRGCPEFLKTVLRLCGGRRVLFNNKTTDEVKKIEQVKQLLAHVEAIENLNGGKALFTEENDLNEKRQGEMLMEQEMEVQSKKPENTEVEEMKKQLEISYGQQMNMMAQMVEDTLKESSASHERMLLALKDKVERSYLENEDMHNETKRCNIL.

An AIG1-type G domain is found at 11-214; sequence EPVRNIVLVG…FTEENDLNEK (204 aa). The G1 stretch occupies residues 20-27; the sequence is GPTGNGKS. Position 20-28 (20-28) interacts with GTP; the sequence is GPTGNGKSS. Residues 46–50 are G2; the sequence is CKTCK. Positions 63 to 66 are G3; sequence DTPG. Residues 133 to 136 form a G4 region; sequence TGGD. A G5 region spans residues 172-174; it reads NNK. A GTP-binding site is contributed by Asn173.

This sequence belongs to the TRAFAC class TrmE-Era-EngA-EngB-Septin-like GTPase superfamily. AIG1/Toc34/Toc159-like paraseptin GTPase family. IAN subfamily. As to expression, expressed in pollen, cotyledons and lateral roots.

The chain is Immune-associated nucleotide-binding protein 5 from Arabidopsis thaliana (Mouse-ear cress).